Consider the following 154-residue polypeptide: UPF0260 protein HI_1355 (154 aa).

Belongs to the UPF0260 family.

In Haemophilus influenzae (strain ATCC 51907 / DSM 11121 / KW20 / Rd), this protein is UPF0260 protein HI_1355.